A 184-amino-acid polypeptide reads, in one-letter code: Ribosome-recycling factor (184 aa).

It belongs to the RRF family.

It localises to the cytoplasm. In terms of biological role, responsible for the release of ribosomes from messenger RNA at the termination of protein biosynthesis. May increase the efficiency of translation by recycling ribosomes from one round of translation to another. This chain is Ribosome-recycling factor, found in Clostridium botulinum (strain Loch Maree / Type A3).